The chain runs to 129 residues: Large ribosomal subunit protein uL22 (129 aa).

This sequence belongs to the universal ribosomal protein uL22 family. Part of the 50S ribosomal subunit.

In terms of biological role, this protein binds specifically to 23S rRNA; its binding is stimulated by other ribosomal proteins, e.g. L4, L17, and L20. It is important during the early stages of 50S assembly. It makes multiple contacts with different domains of the 23S rRNA in the assembled 50S subunit and ribosome. Its function is as follows. The globular domain of the protein is located near the polypeptide exit tunnel on the outside of the subunit, while an extended beta-hairpin is found that lines the wall of the exit tunnel in the center of the 70S ribosome. The chain is Large ribosomal subunit protein uL22 from Agrobacterium fabrum (strain C58 / ATCC 33970) (Agrobacterium tumefaciens (strain C58)).